Reading from the N-terminus, the 233-residue chain is Lectin (233 aa).

N-linked (GlcNAc...) asparagine glycans are attached at residues asparagine 26 and asparagine 108. Mn(2+) is bound by residues glutamate 118 and aspartate 120. The Ca(2+) site is built by aspartate 120, tryptophan 122, asparagine 124, and glutamate 129. Residues glutamate 129 and histidine 134 each contribute to the Mn(2+) site.

It belongs to the leguminous lectin family. In terms of assembly, monomer.

The protein resides in the secreted. Its function is as follows. Has metal-independent hemagglutinating activity towards erythrocytes from rabbit and human. Hemagglutinating activity is inhibited by glycoproteins fetuin, asialo-fetuin, thyroglobulin and azocasein but not by free carbohydrates. Inhibits ADP- and epinephrin-induced but not collagen-, fibrinogen, thrombin- or arachidonic acid-induced platelet aggregation in vitro. Has anticoagulant activity in vitro. This is Lectin from Bauhinia forficata (Brazilian orchid-tree).